A 106-amino-acid polypeptide reads, in one-letter code: Small ribosomal subunit protein uS10 (106 aa).

Belongs to the universal ribosomal protein uS10 family. Part of the 30S ribosomal subunit.

In terms of biological role, involved in the binding of tRNA to the ribosomes. This is Small ribosomal subunit protein uS10 from Wolbachia pipientis subsp. Culex pipiens (strain wPip).